The following is a 375-amino-acid chain: Chaperone protein DnaJ (375 aa).

The J domain occupies 5-70 (DYYEVLGVAR…NKRRAYDAHG (66 aa)). The segment at 131-208 (GIERRIEIPT…CHGAGRVEED (78 aa)) adopts a CR-type zinc-finger fold. C144, C147, C160, C163, C182, C185, C196, and C199 together coordinate Zn(2+). CXXCXGXG motif repeat units lie at residues 144-151 (CAPCHGSG), 160-167 (CGTCHGRG), 182-189 (CPHCDGRG), and 196-203 (CKTCHGAG).

It belongs to the DnaJ family. As to quaternary structure, homodimer. It depends on Zn(2+) as a cofactor.

The protein localises to the cytoplasm. Its function is as follows. Participates actively in the response to hyperosmotic and heat shock by preventing the aggregation of stress-denatured proteins and by disaggregating proteins, also in an autonomous, DnaK-independent fashion. Unfolded proteins bind initially to DnaJ; upon interaction with the DnaJ-bound protein, DnaK hydrolyzes its bound ATP, resulting in the formation of a stable complex. GrpE releases ADP from DnaK; ATP binding to DnaK triggers the release of the substrate protein, thus completing the reaction cycle. Several rounds of ATP-dependent interactions between DnaJ, DnaK and GrpE are required for fully efficient folding. Also involved, together with DnaK and GrpE, in the DNA replication of plasmids through activation of initiation proteins. This Xanthomonas euvesicatoria pv. vesicatoria (strain 85-10) (Xanthomonas campestris pv. vesicatoria) protein is Chaperone protein DnaJ.